The primary structure comprises 118 residues: Large ribosomal subunit protein uL18 (118 aa).

This sequence belongs to the universal ribosomal protein uL18 family. As to quaternary structure, part of the 50S ribosomal subunit; part of the 5S rRNA/L5/L18/L25 subcomplex. Contacts the 5S and 23S rRNAs.

This is one of the proteins that bind and probably mediate the attachment of the 5S RNA into the large ribosomal subunit, where it forms part of the central protuberance. The polypeptide is Large ribosomal subunit protein uL18 (Helicobacter pylori (strain J99 / ATCC 700824) (Campylobacter pylori J99)).